The chain runs to 477 residues: Regulatory protein HrpB (477 aa).

In terms of domain architecture, HTH araC/xylS-type spans 375–477 (RRAYRYIIEN…NEAPSETIWR (103 aa)). DNA-binding regions (H-T-H motif) lie at residues 393–414 (REVA…KSAV) and 444–467 (IIDT…RKQF).

Positive regulation of hypersensitive response genes involved in plant pathogenicity and partly of its own synthesis in minimal medium. The protein is Regulatory protein HrpB (hrpB) of Ralstonia nicotianae (strain ATCC BAA-1114 / GMI1000) (Ralstonia solanacearum).